A 505-amino-acid chain; its full sequence is Lysine--tRNA ligase (505 aa).

Mg(2+) contacts are provided by Glu-415 and Glu-422.

It belongs to the class-II aminoacyl-tRNA synthetase family. As to quaternary structure, homodimer. It depends on Mg(2+) as a cofactor.

Its subcellular location is the cytoplasm. It catalyses the reaction tRNA(Lys) + L-lysine + ATP = L-lysyl-tRNA(Lys) + AMP + diphosphate. This is Lysine--tRNA ligase (lysS) from Salmonella typhimurium (strain LT2 / SGSC1412 / ATCC 700720).